A 448-amino-acid polypeptide reads, in one-letter code: DNA repair protein RadA (448 aa).

Residues 10–27 (CQHCGFTSPKWLGKCVQC) form a C4-type zinc finger. 96 to 103 (GSPGVGKS) contacts ATP. Residues 253-257 (KNRFG) carry the RadA KNRFG motif motif. The tract at residues 351–448 (DVFINVSGGI…NVVGKIVEWM (98 aa)) is lon-protease-like.

This sequence belongs to the RecA family. RadA subfamily.

Functionally, DNA-dependent ATPase involved in processing of recombination intermediates, plays a role in repairing DNA breaks. Stimulates the branch migration of RecA-mediated strand transfer reactions, allowing the 3' invading strand to extend heteroduplex DNA faster. Binds ssDNA in the presence of ADP but not other nucleotides, has ATPase activity that is stimulated by ssDNA and various branched DNA structures, but inhibited by SSB. Does not have RecA's homology-searching function. The polypeptide is DNA repair protein RadA (Helicobacter pylori (strain J99 / ATCC 700824) (Campylobacter pylori J99)).